Reading from the N-terminus, the 574-residue chain is Iron hydrogenase 1 (574 aa).

The 2Fe-2S ferredoxin-type domain occupies 1 to 78 (MKTIIINGVQ…GMIINTNSDA (78 aa)). [2Fe-2S] cluster-binding residues include cysteine 34, cysteine 46, cysteine 49, and cysteine 62. Residues 78–117 (AVNEKIKSRISQLLDIHEFKCGPCNRRENCEFLKLVIKYK) form the 4Fe-4S His(Cys)3-ligated-type domain. Histidine 94, cysteine 98, cysteine 101, cysteine 107, cysteine 147, cysteine 150, cysteine 153, cysteine 157, cysteine 190, cysteine 193, cysteine 196, cysteine 200, cysteine 300, cysteine 355, cysteine 499, and cysteine 503 together coordinate [4Fe-4S] cluster. 4Fe-4S ferredoxin-type domains are found at residues 138–167 (KSLT…YAMK) and 181–210 (DEKC…EKSH). Cysteine 503 contributes to the Fe(2+) binding site.

Monomer. [2Fe-2S] cluster serves as cofactor. [4Fe-4S] cluster is required as a cofactor. It depends on Fe(2+) as a cofactor.

The enzyme catalyses H2 + 2 oxidized [2Fe-2S]-[ferredoxin] = 2 reduced [2Fe-2S]-[ferredoxin] + 2 H(+). This chain is Iron hydrogenase 1, found in Clostridium pasteurianum.